The sequence spans 156 residues: Small ribosomal subunit protein uS7 (156 aa).

It belongs to the universal ribosomal protein uS7 family. As to quaternary structure, part of the 30S ribosomal subunit. Contacts proteins S9 and S11.

One of the primary rRNA binding proteins, it binds directly to 16S rRNA where it nucleates assembly of the head domain of the 30S subunit. Is located at the subunit interface close to the decoding center, probably blocks exit of the E-site tRNA. In Streptococcus suis (strain 98HAH33), this protein is Small ribosomal subunit protein uS7.